The sequence spans 402 residues: Arginine deiminase (402 aa).

Cysteine 392 (amidino-cysteine intermediate) is an active-site residue.

Belongs to the arginine deiminase family.

Its subcellular location is the cytoplasm. The enzyme catalyses L-arginine + H2O = L-citrulline + NH4(+). Its pathway is amino-acid degradation; L-arginine degradation via ADI pathway; carbamoyl phosphate from L-arginine: step 1/2. This Mycolicibacterium gilvum (strain PYR-GCK) (Mycobacterium gilvum (strain PYR-GCK)) protein is Arginine deiminase.